Here is a 417-residue protein sequence, read N- to C-terminus: D-inositol 3-phosphate glycosyltransferase (417 aa).

His10 is a binding site for 1D-myo-inositol 3-phosphate. UDP-N-acetyl-alpha-D-glucosamine is bound by residues 16 to 17 (QP) and Gly24. Residues 21–26 (DAGGMN), Lys79, Tyr112, Thr136, and Arg156 each bind 1D-myo-inositol 3-phosphate. The UDP-N-acetyl-alpha-D-glucosamine site is built by Arg230, Lys235, and Gln296. The Mg(2+) site is built by Tyr305, Arg306, and Ala308. The UDP-N-acetyl-alpha-D-glucosamine site is built by Glu318 and Glu326. Thr332 contributes to the Mg(2+) binding site.

This sequence belongs to the glycosyltransferase group 1 family. MshA subfamily. As to quaternary structure, homodimer.

The enzyme catalyses 1D-myo-inositol 3-phosphate + UDP-N-acetyl-alpha-D-glucosamine = 1D-myo-inositol 2-acetamido-2-deoxy-alpha-D-glucopyranoside 3-phosphate + UDP + H(+). Catalyzes the transfer of a N-acetyl-glucosamine moiety to 1D-myo-inositol 3-phosphate to produce 1D-myo-inositol 2-acetamido-2-deoxy-glucopyranoside 3-phosphate in the mycothiol biosynthesis pathway. The protein is D-inositol 3-phosphate glycosyltransferase of Actinosynnema mirum (strain ATCC 29888 / DSM 43827 / JCM 3225 / NBRC 14064 / NCIMB 13271 / NRRL B-12336 / IMRU 3971 / 101).